Here is a 180-residue protein sequence, read N- to C-terminus: uncharacterized protein (180 aa).

This is an uncharacterized protein from Staphylococcus aureus.